Reading from the N-terminus, the 271-residue chain is Protein FANTASTIC FOUR 1 (271 aa).

An FAF domain is found at 114–168 (NSFPPPLNSVNGFNNSRMVKSYKEDGRLVVQAIRVCSPPRCFVSERREGRLRLCL). The tract at residues 174–255 (NSQDAEEEFE…KRRCNENGCE (82 aa)) is disordered. A compositionally biased stretch (acidic residues) spans 177–224 (DAEEEFEEEDEDDQYDAEEEEEEEEEEEEEEEEEEEEEEEEEEEDEEG). The segment covering 237–247 (GNKKVSNRPKR) has biased composition (basic residues).

Belongs to the fantastic four family. As to expression, expressed in the shoot apex, stamens, anthers and young siliques. Detected in provascular and vascular tissue.

Functionally, able to repress WUS when constitutively overexpressed, but have no effect on CLV3. The chain is Protein FANTASTIC FOUR 1 (FAF1) from Arabidopsis thaliana (Mouse-ear cress).